We begin with the raw amino-acid sequence, 587 residues long: Putative gustatory receptor 59b (587 aa).

Residues 1 to 4 (MPSY) lie on the Cytoplasmic side of the membrane. The helical transmembrane segment at 5 to 25 (MAFTPYIMFSTNYAAIAYILI) threads the bilayer. At 26–62 (SRCYRDSMLLDLQRITLEVNREMLRTGKKMNSLIRRM) the chain is on the extracellular side. A helical transmembrane segment spans residues 63–83 (FFLKTFTLTYSCLSYILAVLV). Over 84–97 (YQWRAQNWSNLFNG) the chain is Cytoplasmic. The chain crosses the membrane as a helical span at residues 98–118 (LLVNISLTILVVTTFFYFVSL). Topologically, residues 119–277 (MHVARGFDFV…CGLYPVNKAK (159 aa)) are extracellular. Asn-159 carries N-linked (GlcNAc...) asparagine glycosylation. A helical transmembrane segment spans residues 278-298 (WLEMVASIVVHSIMLFQFHLV). The Cytoplasmic portion of the chain corresponds to 299 to 309 (MRGGYTTLFSR). Residues 310-330 (TYALLANIITLTMLPIVMWQV) traverse the membrane as a helical segment. The Extracellular segment spans residues 331–403 (RSVFLAKRHY…GIDGVRRSLR (73 aa)). Residues 404–424 (ILLFVKFFTLSWLCITDIIFL) form a helical membrane-spanning segment. Topologically, residues 425-518 (FYSSDAVIWV…IYAPQMLATR (94 aa)) are cytoplasmic. Residues 519-539 (FDHFVIGVIQAYWGAVFTFDL) traverse the membrane as a helical segment. Over 540-587 (STSFLWVVYGSVQYHVRSLDYYLIDYMCDVAVEYHDSARHSWSEKECY) the chain is Extracellular.

This sequence belongs to the insect chemoreceptor superfamily. Gustatory receptor (GR) family. Gr22e subfamily.

The protein localises to the cell membrane. Functionally, probable gustatory receptor which mediates acceptance or avoidance behavior, depending on its substrates. The chain is Putative gustatory receptor 59b from Drosophila erecta (Fruit fly).